The primary structure comprises 910 residues: MRRSAAPSQLQGNSFKKPKFIPPGRSNPGLNEEITKLNPDIKLFEGVAINNTFLPSQNDLRICSLNLPSEESTREINNRDNCSGKYCFEAPTLATLDPPHTVHSAPKEVAVSKEQEEKSDSLVKYFSVVWCKPSKKKHKKWEGDAVLIVKGKSFILKNLEGKDIGRGIGYKFKELEKIEEGQTLMICGKEIEVMGVISPDDFSSGRCFQLGGGSTAISHSSQVARKCFSNPFKSVCKPSSKENRQNDFQNCKPRHDPYTPNSLVMPRPDKNHQWVFNKNCFPLVDVVIDPYLVYHLRPHQKEGIIFLYECVMGMRMNGRCGAILADEMGLGKTLQCISLIWTLQCQGPYGGKPVIKKTLIVTPGSLVNNWKKEFQKWLGSERIKIFTVDQDHKVEEFIKSIFYSVLIISYEMLLRSLDQIKNIKFDLLICDEGHRLKNSAIKTTTALISLSCEKRIILTGTPIQNDLQEFFALIDFVNPGILGSLSSYRKIYEEPIILSREPSASEEEKELGERRAAELTCLTGLFILRRTQEIINKYLPPKIENVVFCRPGALQIELYRKLLNSQVVRFCLQGLLENSPHLICIGALKKLCNHPCLLFNSIKEKECSSTCDKNEEKSLYKGLLSVFPADYNPLLFTEKESGKLQVLSKLLAVIHELRPTEKVVLVSNYTQTLNILQEVCKRHGYAYTRLDGQTPISQRQQIVDGFNSQHSSFFIFLLSSKAGGVGLNLIGGSHLILYDIDWNPATDIQAMSRVWRDGQKYPVHIYRLLTTGTIEEKIYQRQISKQGLCGAVVDLTKTSEHIQFSVEELKNLFTLHESSDCVTHDLLDCECTGEEVHTGDSLEKFIVSRDCQLGPHHQKSNSLKPLSMSQLKQWKHFSGDHLNLTDPFLERITENVSFIFQNITTQATGT.

Polar residues predominate over residues 1–14 (MRRSAAPSQLQGNS). Residues 1–33 (MRRSAAPSQLQGNSFKKPKFIPPGRSNPGLNEE) form a disordered region. S14 bears the Phosphoserine mark. In terms of domain architecture, Helicase ATP-binding spans 313–480 (GMRMNGRCGA…FALIDFVNPG (168 aa)). Residue 326-333 (DEMGLGKT) participates in ATP binding. Positions 431–434 (DEGH) match the DEGH box motif. Residues 649–810 (KLLAVIHELR…HIQFSVEELK (162 aa)) form the Helicase C-terminal domain.

The protein belongs to the SNF2/RAD54 helicase family. In terms of assembly, interacts with RAD51 through the NH2-terminal domain. Immunoprecipitation experiments show that the interaction is constitutive and not induced by ionizing radiation. The interaction may be indirect. Abundantly expressed in testis and spleen. Relatively low levels observed in thymus, prostate, ovary and colon.

It is found in the nucleus. Involved in DNA repair and mitotic recombination. May play an active role in recombination processes in concert with other members of the RAD52 epistasis group. The sequence is that of DNA repair and recombination protein RAD54B (RAD54B) from Homo sapiens (Human).